The primary structure comprises 288 residues: Solute carrier family 25 member 47-B (288 aa).

Solcar repeat units lie at residues 1-83 (MHLA…ILQF), 99-191 (AHIF…ICEI), and 199-286 (PGWP…VVRL). Transmembrane regions (helical) follow at residues 3–23 (LADFLAGSVGGAFGVAVGYPL), 58–75 (GMSMPISTVSISSSLVFG), 101–121 (IFLAGFTGGVTQVLVMAPADI), 175–195 (GPSFATYFLTYNTICEILTTE), 199–219 (PGWPVVLLAGGVSGMCGWAVG), and 257–277 (VLFRGLTVNCIRAFPVNMSVF).

The protein belongs to the mitochondrial carrier (TC 2.A.29) family.

The protein resides in the mitochondrion inner membrane. The protein is Solute carrier family 25 member 47-B (slc25a47b) of Danio rerio (Zebrafish).